A 1024-amino-acid chain; its full sequence is Beta-galactosidase (1024 aa).

2 residues coordinate substrate: N103 and D202. D202 contributes to the Na(+) binding site. Mg(2+) contacts are provided by E417, H419, and E462. Substrate-binding positions include E462 and 538–541 (EYAH). E462 serves as the catalytic Proton donor. E538 acts as the Nucleophile in catalysis. N598 contributes to the Mg(2+) binding site. Na(+)-binding residues include F602 and N605. 2 residues coordinate substrate: N605 and W1000.

Belongs to the glycosyl hydrolase 2 family. Homotetramer. Requires Mg(2+) as cofactor. Na(+) serves as cofactor.

It catalyses the reaction Hydrolysis of terminal non-reducing beta-D-galactose residues in beta-D-galactosides.. The polypeptide is Beta-galactosidase (Escherichia coli O139:H28 (strain E24377A / ETEC)).